A 448-amino-acid chain; its full sequence is tRNA wybutosine-synthesizing protein 2 homolog (448 aa).

Residues Ser-218, Lys-225, Glu-265, and 293–294 (DN) each bind S-adenosyl-L-methionine.

The protein belongs to the class I-like SAM-binding methyltransferase superfamily. TRM5/TYW2 family.

It carries out the reaction 4-demethylwyosine(37) in tRNA(Phe) + S-adenosyl-L-methionine = 4-demethyl-7-[(3S)-3-amino-3-carboxypropyl]wyosine(37) in tRNA(Phe) + S-methyl-5'-thioadenosine + H(+). It participates in tRNA modification; wybutosine-tRNA(Phe) biosynthesis. Its function is as follows. S-adenosyl-L-methionine-dependent transferase that acts as a component of the wybutosine biosynthesis pathway. Wybutosine is a hyper modified guanosine with a tricyclic base found at the 3'-position adjacent to the anticodon of eukaryotic phenylalanine tRNA. Catalyzes the transfer of the alpha-amino-alpha-carboxypropyl (acp) group from S-adenosyl-L-methionine to the C-7 position of 4-demethylwyosine (imG-14) to produce wybutosine-86. This is tRNA wybutosine-synthesizing protein 2 homolog (TRMT12) from Homo sapiens (Human).